A 394-amino-acid polypeptide reads, in one-letter code: S-adenosylmethionine synthase (394 aa).

An ATP-binding site is contributed by H16. Residue D18 coordinates Mg(2+). K(+) is bound at residue E44. Residues E57 and Q100 each contribute to the L-methionine site. The segment at 100–110 (QSPDIAQGVDA) is flexible loop. Residues 172–174 (DAK), 239–240 (RF), D248, 254–255 (RK), A271, and K275 each bind ATP. Residue D248 participates in L-methionine binding. K279 serves as a coordination point for L-methionine.

Belongs to the AdoMet synthase family. As to quaternary structure, homotetramer; dimer of dimers. It depends on Mg(2+) as a cofactor. K(+) serves as cofactor.

The protein localises to the cytoplasm. It catalyses the reaction L-methionine + ATP + H2O = S-adenosyl-L-methionine + phosphate + diphosphate. The protein operates within amino-acid biosynthesis; S-adenosyl-L-methionine biosynthesis; S-adenosyl-L-methionine from L-methionine: step 1/1. In terms of biological role, catalyzes the formation of S-adenosylmethionine (AdoMet) from methionine and ATP. The overall synthetic reaction is composed of two sequential steps, AdoMet formation and the subsequent tripolyphosphate hydrolysis which occurs prior to release of AdoMet from the enzyme. This is S-adenosylmethionine synthase from Enterococcus faecalis (strain ATCC 700802 / V583).